Reading from the N-terminus, the 106-residue chain is ATP-dependent Clp protease adapter protein ClpS (106 aa).

The protein belongs to the ClpS family. In terms of assembly, binds to the N-terminal domain of the chaperone ClpA.

Functionally, involved in the modulation of the specificity of the ClpAP-mediated ATP-dependent protein degradation. The chain is ATP-dependent Clp protease adapter protein ClpS from Citrobacter koseri (strain ATCC BAA-895 / CDC 4225-83 / SGSC4696).